A 305-amino-acid polypeptide reads, in one-letter code: LysM and putative peptidoglycan-binding domain-containing protein 3 (305 aa).

Over 1–221 the chain is Extracellular; the sequence is MTGRNQHNGF…PYYGADWGMR (221 aa). N-linked (GlcNAc...) asparagine glycosylation is present at Asn29. The disordered stretch occupies residues 31–60; it reads SETEYSEEDGEAFELRSRGRERHHRSTSRD. The 45-residue stretch at 68 to 112 folds into the LysM domain; that stretch reads LIREIKEGDTLISISLQYFCTVADIKRANNLLTEQDFFALRSLRI. A compositionally biased stretch (polar residues) spans 121 to 144; it reads TETHNTAPHKSSSPSGTCRITETP. Residues 121–156 are disordered; that stretch reads TETHNTAPHKSSSPSGTCRITETPVSGASLDSTSSS. Over residues 146–156 the composition is skewed to low complexity; sequence SGASLDSTSSS. A helical transmembrane segment spans residues 222–242; that stretch reads WWTAVAIMLVVGIVTPVFYLL. At 243-305 the chain is on the cytoplasmic side; that stretch reads YYEVLMKADV…QHHVKHQEET (63 aa).

Its subcellular location is the cell membrane. The protein localises to the golgi apparatus. In terms of biological role, essential for Golgi structural integrity. The sequence is that of LysM and putative peptidoglycan-binding domain-containing protein 3 (lysmd3) from Danio rerio (Zebrafish).